The sequence spans 287 residues: ATP synthase gamma chain (287 aa).

This sequence belongs to the ATPase gamma chain family. In terms of assembly, F-type ATPases have 2 components, CF(1) - the catalytic core - and CF(0) - the membrane proton channel. CF(1) has five subunits: alpha(3), beta(3), gamma(1), delta(1), epsilon(1). CF(0) has three main subunits: a, b and c.

It localises to the cell membrane. Its function is as follows. Produces ATP from ADP in the presence of a proton gradient across the membrane. The gamma chain is believed to be important in regulating ATPase activity and the flow of protons through the CF(0) complex. In Staphylococcus carnosus (strain TM300), this protein is ATP synthase gamma chain.